Here is a 305-residue protein sequence, read N- to C-terminus: Glutaminase 2 (305 aa).

Substrate contacts are provided by serine 61, asparagine 113, glutamate 158, asparagine 165, tyrosine 189, tyrosine 241, and valine 259.

This sequence belongs to the glutaminase family. As to quaternary structure, homotetramer.

It catalyses the reaction L-glutamine + H2O = L-glutamate + NH4(+). The polypeptide is Glutaminase 2 (Clostridium perfringens (strain 13 / Type A)).